Reading from the N-terminus, the 124-residue chain is Alpha-amylase inhibitor 0.19 (124 aa).

5 disulfide bridges follow: Cys-6–Cys-52, Cys-20–Cys-41, Cys-28–Cys-83, Cys-42–Cys-99, and Cys-54–Cys-115.

This sequence belongs to the protease inhibitor I6 (cereal trypsin/alpha-amylase inhibitor) family. Homodimer. Post-translationally, the disulfide bonds are essential for the inhibitor activity. Endosperm.

Its subcellular location is the secreted. Functionally, alpha-amylase inhibitor. In Triticum aestivum (Wheat), this protein is Alpha-amylase inhibitor 0.19.